Consider the following 147-residue polypeptide: Ribosome maturation factor RimP (147 aa).

It belongs to the RimP family.

The protein resides in the cytoplasm. Required for maturation of 30S ribosomal subunits. The polypeptide is Ribosome maturation factor RimP (Sulfurihydrogenibium azorense (strain DSM 15241 / OCM 825 / Az-Fu1)).